We begin with the raw amino-acid sequence, 95 residues long: Small ribosomal subunit protein bS6 (95 aa).

The protein belongs to the bacterial ribosomal protein bS6 family.

Binds together with bS18 to 16S ribosomal RNA. The protein is Small ribosomal subunit protein bS6 of Thermoanaerobacter pseudethanolicus (strain ATCC 33223 / 39E) (Clostridium thermohydrosulfuricum).